Here is a 199-residue protein sequence, read N- to C-terminus: Inner membrane protein E199L (199 aa).

N131 carries an N-linked (GlcNAc...) asparagine; by host glycan. Residues I150–I170 form a helical membrane-spanning segment.

Belongs to the asfivirus E199L family. In terms of assembly, interacts with host PYCR2; this interaction results in autophagy activation. Contains intramolecular disulfide bonds.

The protein resides in the virion membrane. It is found in the host membrane. In terms of biological role, essential for viral fusion with host endosomal membrane and core release. Not required for virus morphogenesis and egress. Induces complete autophagy through the interaction with and down-regulation of host PYCR2. The protein is Inner membrane protein E199L of African swine fever virus (isolate Tick/South Africa/Pretoriuskop Pr4/1996) (ASFV).